Consider the following 71-residue polypeptide: Exodeoxyribonuclease 7 small subunit (71 aa).

This sequence belongs to the XseB family. As to quaternary structure, heterooligomer composed of large and small subunits.

The protein resides in the cytoplasm. The catalysed reaction is Exonucleolytic cleavage in either 5'- to 3'- or 3'- to 5'-direction to yield nucleoside 5'-phosphates.. Functionally, bidirectionally degrades single-stranded DNA into large acid-insoluble oligonucleotides, which are then degraded further into small acid-soluble oligonucleotides. This is Exodeoxyribonuclease 7 small subunit from Streptococcus agalactiae serotype Ia (strain ATCC 27591 / A909 / CDC SS700).